The primary structure comprises 86 residues: Small ribosomal subunit protein bS20 (86 aa).

This sequence belongs to the bacterial ribosomal protein bS20 family.

Functionally, binds directly to 16S ribosomal RNA. The sequence is that of Small ribosomal subunit protein bS20 from Aliarcobacter butzleri (strain RM4018) (Arcobacter butzleri).